A 534-amino-acid chain; its full sequence is MAGGGVVVVSGRGLSTGDYRGGLTVYVVMVAFMAACGGLLLGYDNGVTGGVVSLEAFEKKFFPDVWAKKQEVHEDSPYCTYDNAKLQLFVSSLFLAGLVSCLFASWITRNWGRKVTMGIGGAFFVAGGLVNAFAQDMAMLIVGRVLLGFGVGLGSQVVPQYLSEVAPFSHRGMLNIGYQLFVTIGILIAGLVNYAVRDWENGWRLSLGPAAAPGAILFLGSLVLPESPNFLVEKGKTEKGREVLQKLCGTSEVDAEFADIVAAVEIARPITMRQSWASLFTRRYMPQLLTSFVIQFFQQFTGINAIIFYVPVLFSSLGSANSAALLNTVVVGAVNVGSTLIAVMFSDKFGRRFLLIEGGIQCCLAMLTTGVVLAIEFAKYGTDPLPKAVASGILAVICIFISGFAWSWGPMGWLIPSEIFTLETRPAGTAVAVVGNFLFSFVIGQAFVSMLCAMEYGVFLFFAGWLVIMVLCAIFLLPETKGVPIERVQALYARHWFWNRVMGPAAAEVIAEDEKRVAAASAIIKEEELSKAMK.

Residues 1-21 (MAGGGVVVVSGRGLSTGDYRG) are Cytoplasmic-facing. A helical membrane pass occupies residues 22–42 (GLTVYVVMVAFMAACGGLLLG). The Extracellular portion of the chain corresponds to 43–87 (YDNGVTGGVVSLEAFEKKFFPDVWAKKQEVHEDSPYCTYDNAKLQ). A helical membrane pass occupies residues 88-108 (LFVSSLFLAGLVSCLFASWIT). Topologically, residues 109-114 (RNWGRK) are cytoplasmic. The helical transmembrane segment at 115 to 135 (VTMGIGGAFFVAGGLVNAFAQ) threads the bilayer. Over 136–144 (DMAMLIVGR) the chain is Extracellular. Residues 145-165 (VLLGFGVGLGSQVVPQYLSEV) traverse the membrane as a helical segment. Residues 166–173 (APFSHRGM) are Cytoplasmic-facing. Residues 174–194 (LNIGYQLFVTIGILIAGLVNY) traverse the membrane as a helical segment. The Extracellular segment spans residues 195–204 (AVRDWENGWR). A helical transmembrane segment spans residues 205 to 225 (LSLGPAAAPGAILFLGSLVLP). Residues 226–299 (ESPNFLVEKG…TSFVIQFFQQ (74 aa)) lie on the Cytoplasmic side of the membrane. Residues 300–322 (FTGINAIIFYVPVLFSSLGSANS) traverse the membrane as a helical segment. Residues 323–328 (AALLNT) lie on the Extracellular side of the membrane. Residues 329 to 349 (VVVGAVNVGSTLIAVMFSDKF) traverse the membrane as a helical segment. Residues 350 to 352 (GRR) are Cytoplasmic-facing. Residues 353-373 (FLLIEGGIQCCLAMLTTGVVL) form a helical membrane-spanning segment. Topologically, residues 374-387 (AIEFAKYGTDPLPK) are extracellular. Residues 388–408 (AVASGILAVICIFISGFAWSW) form a helical membrane-spanning segment. Topologically, residues 409 to 433 (GPMGWLIPSEIFTLETRPAGTAVAV) are cytoplasmic. A helical membrane pass occupies residues 434–454 (VGNFLFSFVIGQAFVSMLCAM). At 455 to 456 (EY) the chain is on the extracellular side. A helical transmembrane segment spans residues 457–477 (GVFLFFAGWLVIMVLCAIFLL). Residues 478–534 (PETKGVPIERVQALYARHWFWNRVMGPAAAEVIAEDEKRVAAASAIIKEEELSKAMK) lie on the Cytoplasmic side of the membrane.

It belongs to the major facilitator superfamily. Sugar transporter (TC 2.A.1.1) family.

Its subcellular location is the membrane. In terms of biological role, active uptake of hexoses. This chain is H(+)/hexose cotransporter 1 (HUP1), found in Parachlorella kessleri (Green alga).